A 604-amino-acid polypeptide reads, in one-letter code: BTB/POZ domain-containing protein SR1IP1 (604 aa).

One can recognise a BTB domain in the interval 27 to 96 (SDVTVHVGEA…CYGINFDMST (70 aa)). The 274-residue stretch at 201-474 (DWWAEDLTVL…VQVLYYEQQR (274 aa)) folds into the NPH3 domain. Phosphotyrosine is present on tyrosine 415. Disordered regions lie at residues 478 to 499 (EVTN…VLPP) and 532 to 604 (FEKE…HSIS). A coiled-coil region spans residues 500-541 (KLSSYTDELSKLKRENQDLKLELLKMKMKLKEFEKESEKKTS). A compositionally biased stretch (low complexity) spans 541 to 558 (SSSTISTNPSSPISTAST). Positions 591–604 (GRTKPPKDRRHSIS) are enriched in basic residues.

It belongs to the NPH3 family. In terms of assembly, interacts with CAMTA3 and CUL3A.

It participates in protein modification; protein ubiquitination. Its function is as follows. Acts as a substrate-specific adapter of an E3 ubiquitin-protein ligase complex (CUL3-RBX1-BTB) which mediates the ubiquitination and subsequent proteasomal degradation of target proteins. Involved in disease resistance. Acts as a substrate adapter that recruits CAMTA3/SR1 for ubiquitination and degradation during pathogen infection. Acts as a positive regulator of plant defense by removing the defense suppressor CAMTA3/SR1. The sequence is that of BTB/POZ domain-containing protein SR1IP1 from Arabidopsis thaliana (Mouse-ear cress).